The following is a 352-amino-acid chain: tRNA (guanine(26)-N(2))-dimethyltransferase (352 aa).

The region spanning 4–350 (ILNKEGAVEF…ANYDEIARIL (347 aa)) is the Trm1 methyltransferase domain. R39, R65, D83, D109, and A110 together coordinate S-adenosyl-L-methionine.

Belongs to the class I-like SAM-binding methyltransferase superfamily. Trm1 family.

It catalyses the reaction guanosine(26) in tRNA + 2 S-adenosyl-L-methionine = N(2)-dimethylguanosine(26) in tRNA + 2 S-adenosyl-L-homocysteine + 2 H(+). Functionally, dimethylates a single guanine residue at position 26 of a number of tRNAs using S-adenosyl-L-methionine as donor of the methyl groups. This chain is tRNA (guanine(26)-N(2))-dimethyltransferase, found in Pyrobaculum islandicum (strain DSM 4184 / JCM 9189 / GEO3).